Consider the following 388-residue polypeptide: Probable serine/threonine-protein kinase PBL20 (388 aa).

Residue C3 is the site of S-palmitoyl cysteine attachment. The region spanning 91–372 is the Protein kinase domain; it reads FSRKLKIGEG…FVVESLTNII (282 aa). Residues 97-105 and K128 contribute to the ATP site; that span reads IGEGGFGSV. D221 (proton acceptor) is an active-site residue.

Belongs to the protein kinase superfamily. Ser/Thr protein kinase family.

It localises to the cell membrane. The catalysed reaction is L-seryl-[protein] + ATP = O-phospho-L-seryl-[protein] + ADP + H(+). It carries out the reaction L-threonyl-[protein] + ATP = O-phospho-L-threonyl-[protein] + ADP + H(+). In terms of biological role, may be involved in plant defense signaling. The polypeptide is Probable serine/threonine-protein kinase PBL20 (Arabidopsis thaliana (Mouse-ear cress)).